We begin with the raw amino-acid sequence, 261 residues long: tRNA pseudouridine synthase A (261 aa).

The active-site Nucleophile is Asp51. Tyr109 contacts substrate.

It belongs to the tRNA pseudouridine synthase TruA family. As to quaternary structure, homodimer.

It carries out the reaction uridine(38/39/40) in tRNA = pseudouridine(38/39/40) in tRNA. In terms of biological role, formation of pseudouridine at positions 38, 39 and 40 in the anticodon stem and loop of transfer RNAs. This Shewanella baltica (strain OS155 / ATCC BAA-1091) protein is tRNA pseudouridine synthase A.